Reading from the N-terminus, the 407-residue chain is Peptidase T (407 aa).

Histidine 81 contributes to the Zn(2+) binding site. Aspartate 83 is an active-site residue. Residue aspartate 142 participates in Zn(2+) binding. Glutamate 176 acts as the Proton acceptor in catalysis. The Zn(2+) site is built by glutamate 177, aspartate 199, and histidine 381.

Belongs to the peptidase M20B family. It depends on Zn(2+) as a cofactor.

The protein localises to the cytoplasm. It carries out the reaction Release of the N-terminal residue from a tripeptide.. In terms of biological role, cleaves the N-terminal amino acid of tripeptides. This is Peptidase T from Streptococcus pneumoniae (strain P1031).